The primary structure comprises 353 residues: Paraneoplastic antigen Ma1 (353 aa).

The protein belongs to the PNMA family. As to expression, testis- and brain-specific. In some cancer patients, specifically expressed by paraneoplastic tumor cells.

It is found in the nucleus. The protein localises to the nucleolus. In Homo sapiens (Human), this protein is Paraneoplastic antigen Ma1 (PNMA1).